Reading from the N-terminus, the 644-residue chain is Chaperone protein DnaK (644 aa).

A Phosphothreonine; by autocatalysis modification is found at threonine 195. The disordered stretch occupies residues 598 to 644 (KQAAPGAGAPGAGPGPEAAGGAQQAQAEPKKDEGVIDAEYVDVDEKK). Residues 612–624 (GPEAAGGAQQAQA) show a composition bias toward low complexity. Acidic residues predominate over residues 632 to 644 (VIDAEYVDVDEKK).

It belongs to the heat shock protein 70 family.

In terms of biological role, acts as a chaperone. The protein is Chaperone protein DnaK of Koribacter versatilis (strain Ellin345).